We begin with the raw amino-acid sequence, 444 residues long: C4-dicarboxylate transport protein (444 aa).

The next 8 membrane-spanning stretches (helical) occupy residues 19 to 39 (HLYFQVIVAIIGGILLGHFYP), 55 to 75 (LVKMVIAPVIFLTVATGIAGM), 90 to 110 (IYFLCFSTLALVVGMLVSNIL), 161 to 181 (ILQVLFFSVLFGLALAMVGDL), 199 to 219 (LVAILMKAAPIGAFGAMAFTI), 230 to 250 (LAFLIGTFYLTSLLFVLVVLG), 343 to 363 (LLLVAMLSSKGAAGITGAGFI), and 366 to 386 (AATLSVVPSVPVAGMALILGI).

The protein belongs to the dicarboxylate/amino acid:cation symporter (DAACS) (TC 2.A.23) family.

The protein resides in the cell inner membrane. In terms of biological role, responsible for the transport of dicarboxylates such as succinate, fumarate, and malate from the periplasm across the membrane. The protein is C4-dicarboxylate transport protein of Allorhizobium ampelinum (strain ATCC BAA-846 / DSM 112012 / S4) (Agrobacterium vitis (strain S4)).